Here is a 104-residue protein sequence, read N- to C-terminus: Protein METHYLENE BLUE SENSITIVITY 2 (104 aa).

The segment covering 1–11 (MTGKAKPKKHT) has biased composition (basic residues). Disordered stretches follow at residues 1–46 (MTGK…GHAK) and 64–104 (IHHE…SLKK). 2 stretches are compositionally biased toward basic and acidic residues: residues 36-46 (RTGKEKGGHAK) and 73-82 (LTYEEPRNLH).

The protein resides in the nucleus. The protein localises to the cytoplasm. Its subcellular location is the stress granule. Functionally, required for acclimation to reactive oxygen species (ROS) responses downstream of beta-cyclocitral, including singlet oxygen 1O(2) detoxification reactions, especially upon light-mediated photooxidative stress, and leading to programmed cell death. Prevents leaf senescence. The sequence is that of Protein METHYLENE BLUE SENSITIVITY 2 from Arabidopsis thaliana (Mouse-ear cress).